The chain runs to 333 residues: tRNA N6-adenosine threonylcarbamoyltransferase (333 aa).

2 residues coordinate Fe cation: histidine 111 and histidine 115. Residues 134–138 (LVSGG), aspartate 167, glycine 180, and asparagine 272 contribute to the substrate site. Fe cation is bound at residue aspartate 300.

The protein belongs to the KAE1 / TsaD family. It depends on Fe(2+) as a cofactor.

The protein localises to the cytoplasm. The enzyme catalyses L-threonylcarbamoyladenylate + adenosine(37) in tRNA = N(6)-L-threonylcarbamoyladenosine(37) in tRNA + AMP + H(+). In terms of biological role, required for the formation of a threonylcarbamoyl group on adenosine at position 37 (t(6)A37) in tRNAs that read codons beginning with adenine. Is involved in the transfer of the threonylcarbamoyl moiety of threonylcarbamoyl-AMP (TC-AMP) to the N6 group of A37, together with TsaE and TsaB. TsaD likely plays a direct catalytic role in this reaction. In Legionella pneumophila subsp. pneumophila (strain Philadelphia 1 / ATCC 33152 / DSM 7513), this protein is tRNA N6-adenosine threonylcarbamoyltransferase.